The sequence spans 442 residues: MEVPFTIPGDQVNAILYKKTKDKYLSRLSKVTMPSNNRIDALCMHFGSCGGCCWQQLPYELQLKQKEKSIQNLFKPYLNENVKWHSIIPSSPWHYRNKMELTFSSDKAGRRYLGLIMQGTRGHVFQMKECLLANGWFAQAARAIQKWWDNSDVQAYHAIKDRGSLRTLTLREGLRTGDRLVMLTVSGNPDYALTKSQLQSFVQVLRDSIELSNSDQKLSVFLRIQQIAKGRPTNFYEMLLYGPDHIREKLYLPDFNEAIQTLNFRISPSAFFQPNTEQAEKLYSQALKLADLSASHVVYDLYCGTGTLGICSAKYVKEVIGIELSRESVLDARENVKENGLSNVTIKSGDVGQVLEALSQENSLKPDVVMVDPPRIGLDAKAIKHILDLKAPKLVYISCNPKTQVMNLGPLIDGGYQLQIVQPVDQFPQTVHVENITLLTLP.

Residues Cys43, Cys49, Cys52, and Cys130 each contribute to the [4Fe-4S] cluster site. 4 residues coordinate S-adenosyl-L-methionine: Gln273, Tyr302, Glu323, and Asp372. Cys399 functions as the Nucleophile in the catalytic mechanism.

This sequence belongs to the class I-like SAM-binding methyltransferase superfamily. RNA M5U methyltransferase family.

This is an uncharacterized protein from Protochlamydia amoebophila (strain UWE25).